We begin with the raw amino-acid sequence, 77 residues long: RNA-binding protein Hfq (77 aa).

The Sm domain occupies 9 to 69; sequence DQFLNQLRKE…ISTFAPQKNV (61 aa).

It belongs to the Hfq family. In terms of assembly, homohexamer.

Its function is as follows. RNA chaperone that binds small regulatory RNA (sRNAs) and mRNAs to facilitate mRNA translational regulation in response to envelope stress, environmental stress and changes in metabolite concentrations. Also binds with high specificity to tRNAs. The chain is RNA-binding protein Hfq from Shouchella clausii (strain KSM-K16) (Alkalihalobacillus clausii).